The chain runs to 322 residues: N-acetyl-gamma-glutamyl-phosphate reductase (322 aa).

C132 is an active-site residue.

This sequence belongs to the NAGSA dehydrogenase family. Type 1 subfamily.

Its subcellular location is the cytoplasm. The enzyme catalyses N-acetyl-L-glutamate 5-semialdehyde + phosphate + NADP(+) = N-acetyl-L-glutamyl 5-phosphate + NADPH + H(+). Its pathway is amino-acid biosynthesis; L-arginine biosynthesis; N(2)-acetyl-L-ornithine from L-glutamate: step 3/4. In terms of biological role, catalyzes the NADPH-dependent reduction of N-acetyl-5-glutamyl phosphate to yield N-acetyl-L-glutamate 5-semialdehyde. The sequence is that of N-acetyl-gamma-glutamyl-phosphate reductase from Bacteroides thetaiotaomicron (strain ATCC 29148 / DSM 2079 / JCM 5827 / CCUG 10774 / NCTC 10582 / VPI-5482 / E50).